The chain runs to 510 residues: MPLSLGAEMWGPAAWLLLLLLLASFTGQRLAGELETSDLVTVVLGQDAKLPCFYRGDPGEQVEHVAWARVDAGEGGRELALLNSKYGLHVSSAYEGRVEQPPPPRNPLDGAVLLRNAVHADEGEYECRVSTFPAGSFQARLRLRVLVPPLPSLNPGPPLEEGQGLTLAASCTAEGSPAPSVTWDTEVKGTASHRSFTHSRSAAVTSEFHLVPSRSMNGQPLTCVVSHPGLLQDQRITHILQVAFLAEASVRGLEDRKLWQVGREGAMLKCLSEGQPPPSYNWTRLDGPLPSGVRAEGDTLGFPTLTPEHSGTYVCRVSNALSSRDSQVVVDVLDPEDAPGKQVDLVSASVVVVGVIAALLFCLLVVVVVLMSRYHRRKAQQMTQKYEEELTLTRENSIRRLHSHHSDPRNQPEESVGLRAEGHPDSLKDNSSCSVMSEEPEGRSYSTLTTVREIETQTELPSPGPGRAEEEEDRDEGIKQAMNHFVQENGTLRAKPTGNGIYINGRGHLV.

An N-terminal signal peptide occupies residues 1–31 (MPLSLGAEMWGPAAWLLLLLLLASFTGQRLA). Positions 32 to 144 (GELETSDLVT…GSFQARLRLR (113 aa)) constitute an Ig-like V-type domain. The Extracellular segment spans residues 32–349 (GELETSDLVT…GKQVDLVSAS (318 aa)). Intrachain disulfides connect Cys52–Cys127, Cys171–Cys223, and Cys270–Cys315. Ig-like C2-type domains are found at residues 148–237 (PPLP…QRIT) and 248–331 (ASVR…VVVD). N-linked (GlcNAc...) asparagine glycosylation is present at Asn281. Residues 350-370 (VVVVGVIAALLFCLLVVVVVL) form a helical membrane-spanning segment. The Cytoplasmic portion of the chain corresponds to 371–510 (MSRYHRRKAQ…IYINGRGHLV (140 aa)). Basic and acidic residues predominate over residues 400–412 (RLHSHHSDPRNQP). A disordered region spans residues 400–475 (RLHSHHSDPR…GRAEEEEDRD (76 aa)).

Belongs to the nectin family. As to quaternary structure, self-associates. Interacts via its Ig-like V-type domain with NECTIN1 Ig-like V-type domain. Interacts via its C-terminus with AFDN. Interacts with TIGIT.

It localises to the cell membrane. The protein resides in the cell junction. It is found in the adherens junction. Seems to be involved in cell adhesion through trans-homophilic and -heterophilic interactions, the latter including specifically interactions with NECTIN1. Plays a role in the senescence-associated cell size enlargement via SFK/PI3K/Rac1 and thus promotes senescent cell survival. Also participates in the innate immune response by acting as a ligand for the receptor TIGIT to inhibit NK-cell activity. The polypeptide is Nectin-4 (Bos taurus (Bovine)).